We begin with the raw amino-acid sequence, 58 residues long: Light-harvesting protein B-875 alpha chain (58 aa).

Residues 1–15 (MSKFYKIWMIFDPRR) are Cytoplasmic-facing. Residues 16–36 (VFVAQGVFLFLLAVMIHLILL) traverse the membrane as a helical segment. Histidine 32 is an a bacteriochlorophyll binding site. The Periplasmic portion of the chain corresponds to 37–58 (STPSYNWLEISAAKYNRVAVAE).

The protein belongs to the antenna complex alpha subunit family. As to quaternary structure, the core complex is formed by different alpha and beta chains, binding bacteriochlorophyll molecules, and arranged most probably in tetrameric structures disposed around the reaction center. The non-pigmented gamma chains may constitute additional components.

Its subcellular location is the cell inner membrane. In terms of biological role, antenna complexes are light-harvesting systems, which transfer the excitation energy to the reaction centers. The chain is Light-harvesting protein B-875 alpha chain (pufA) from Cereibacter sphaeroides (strain ATCC 17023 / DSM 158 / JCM 6121 / CCUG 31486 / LMG 2827 / NBRC 12203 / NCIMB 8253 / ATH 2.4.1.) (Rhodobacter sphaeroides).